We begin with the raw amino-acid sequence, 355 residues long: 3'-5' exonuclease (355 aa).

Residues 1-119 (MDKFLIKMPI…TPSPEKVKPE (119 aa)) form a disordered region. 2 stretches are compositionally biased toward basic and acidic residues: residues 13-29 (KNNE…KETP) and 71-91 (KNLD…ENPP). Phosphoserine occurs at positions 104 and 112. The 3'-5' exonuclease domain occupies 154–315 (TDVDVVPMAF…GQVIYRDLEQ (162 aa)). Mg(2+) contacts are provided by aspartate 164, glutamate 166, and aspartate 302.

The protein belongs to the WRNexo family.

It localises to the nucleus. Functionally, has exonuclease activity on both single-stranded and duplex templates bearing overhangs, but not blunt ended duplex DNA, and cleaves in a 3'-5' direction. Essential for the formation of DNA replication focal centers. Has an important role in maintaining genome stability. This is 3'-5' exonuclease from Drosophila persimilis (Fruit fly).